The chain runs to 328 residues: MPGQYAQSWLDWEAQSGGRSVLHGTPDEIKAMYAGLSQALKPMAPPFSENVDVTEGDVDGIKYRIYKLKGERGPLPIAFNTHGGGWMVGDLDTDHLLCGVIAEHTKSVVVNVDYRLTPDVAYPVPLEDSLKVYKWAAANASSFGGDPDKFYTIGGSAGGALALQIANKIKKDPQLKDGLKGVVALVPATTHWEAVPEKYKSKYKAVEDNKTGVPIIDGESMEIFFKYAKVDPSDPDTFTLLAEDNHKNFPPTYFASCEFDPLRDDAYVMEAALKEAGVPTKHDHYPGMPHYFWLIPTVPESKIFVENLLQGIGWILSQMKGATRSSYI.

The short motif at 82–84 is the Involved in the stabilization of the negatively charged intermediate by the formation of the oxyanion hole element; that stretch reads HGG. Active-site residues include Ser-156, Asp-260, and His-290.

Belongs to the 'GDXG' lipolytic enzyme family.

The catalysed reaction is (2S,3S)-versiconal hemiacetal acetate + H2O = (2S-3S)-versiconal hemiacetal + acetate + H(+). It carries out the reaction (3S)-versiconol acetate + H2O = (S)-versiconol + acetate + H(+). It participates in mycotoxin biosynthesis. Its function is as follows. Versiconal hemiacetal acetate esterase; part of the fragmented gene cluster that mediates the biosynthesis of dothistromin (DOTH), a polyketide toxin very similar in structure to the aflatoxin precursor, versicolorin B. The first step of the pathway is the conversion of acetate to norsolorinic acid (NOR) and requires the fatty acid synthase subunits hexA and hexB, as well as the polyketide synthase pksA. PksA combines a hexanoyl starter unit and 7 malonyl-CoA extender units to synthesize the precursor NOR. The hexanoyl starter unit is provided to the acyl-carrier protein (ACP) domain by the fungal fatty acid synthase hexA/hexB. The second step is the conversion of NOR to averantin (AVN) and requires the norsolorinic acid ketoreductase nor1, which catalyzes the dehydration of norsolorinic acid to form (1'S)-averantin. The cytochrome P450 monooxygenase avnA then catalyzes the hydroxylation of AVN to 5'hydroxyaverantin (HAVN). The next step is performed by adhA that transforms HAVN to averufin (AVF). Averufin might then be converted to hydroxyversicolorone by cypX and avfA. Hydroxyversicolorone is further converted versiconal hemiacetal acetate (VHA) by moxY. VHA is then the substrate for the versiconal hemiacetal acetate esterase est1 to yield versiconal (VAL). Versicolorin B synthase vbsA then converts VAL to versicolorin B (VERB) by closing the bisfuran ring. Then, the activity of the versicolorin B desaturase verB leads to versicolorin A (VERA). DotB, a predicted chloroperoxidase, may perform epoxidation of the A-ring of VERA. Alternatively, a cytochrome P450, such as cypX or avnA could catalyze this step. It is also possible that another, uncharacterized, cytochrome P450 enzyme is responsible for this step. Opening of the epoxide could potentially be achieved by the epoxide hydrolase epoA. However, epoA seems not to be required for DOTH biosynthesis, but other epoxide hydrolases may have the ability to complement this hydrolysis. Alternatively, opening of the epoxide ring could be achieved non-enzymatically. The next step is the deoxygenation of ring A to yield the 5,8-dihydroxyanthraquinone which is most likely catalyzed by the NADPH dehydrogenase encoded by ver1. The last stages of DOTH biosynthesis are proposed to involve hydroxylation of the bisfuran. OrdB and norB might have oxidative roles here. An alternative possibility is that cytochrome P450 monoogenases such as avnA and cypX might perform these steps in addition to previously proposed steps. In Dothistroma septosporum (strain NZE10 / CBS 128990) (Red band needle blight fungus), this protein is Versiconal hemiacetal acetate esterase.